A 145-amino-acid polypeptide reads, in one-letter code: Cytochrome c2 (145 aa).

A signal peptide spans Met-1–Ala-21. The residue at position 22 (Gln-22) is a Pyrrolidone carboxylic acid. Cys-36, Cys-39, His-40, and Met-121 together coordinate heme c.

This sequence belongs to the cytochrome c family. Post-translationally, binds 1 heme c group covalently per subunit.

It localises to the periplasm. Its function is as follows. Cytochrome c2 is found mainly in purple, non-sulfur, photosynthetic bacteria where it functions as the electron donor to the oxidized bacteriochlorophyll in the photophosphorylation pathway. However, it may also have a role in the respiratory chain and is found in some non-photosynthetic bacteria. This is Cytochrome c2 (cycA) from Cereibacter sphaeroides (strain ATCC 17023 / DSM 158 / JCM 6121 / CCUG 31486 / LMG 2827 / NBRC 12203 / NCIMB 8253 / ATH 2.4.1.) (Rhodobacter sphaeroides).